The chain runs to 83 residues: Small ribosomal subunit protein eS21 (83 aa).

This sequence belongs to the eukaryotic ribosomal protein eS21 family. Component of the 40S small ribosomal subunit.

The protein localises to the cytoplasm. The protein resides in the cytosol. It localises to the rough endoplasmic reticulum. Functionally, component of the small ribosomal subunit. The ribosome is a large ribonucleoprotein complex responsible for the synthesis of proteins in the cell. This chain is Small ribosomal subunit protein eS21 (rps21), found in Ictalurus punctatus (Channel catfish).